Reading from the N-terminus, the 517-residue chain is L-amino-acid oxidase (517 aa).

The N-terminal stretch at 1–18 (MNVFFMFSLLFLAALESC) is a signal peptide. A disulfide bridge links Cys29 with Cys192. Residues 62–63 (MA), 82–83 (EA), Arg90, and 106–109 (GPMR) contribute to the FAD site. Arg109 serves as a coordination point for substrate. Residue Asn191 is glycosylated (N-linked (GlcNAc...) asparagine). Val280 contributes to the FAD binding site. Cys350 and Cys431 are joined by a disulfide. Asn380 carries N-linked (GlcNAc...) asparagine glycosylation. Tyr391 is a substrate binding site. FAD contacts are provided by residues Glu476 and 483 to 488 (GWLDST). Substrate is bound at residue 483–484 (GW).

It belongs to the flavin monoamine oxidase family. FIG1 subfamily. In terms of assembly, homodimer; non-covalently linked. It depends on FAD as a cofactor. N-glycosylated. In terms of tissue distribution, expressed by the venom gland.

The protein localises to the secreted. The catalysed reaction is an L-alpha-amino acid + O2 + H2O = a 2-oxocarboxylate + H2O2 + NH4(+). Its function is as follows. Catalyzes an oxidative deamination of predominantly hydrophobic and aromatic L-amino acids, thus producing hydrogen peroxide that may contribute to the diverse toxic effects of this enzyme. Exhibits diverse biological activities, such as hemorrhage, hemolysis, edema, apoptosis of vascular endothelial cells or tumor cell lines, antibacterial and antiparasitic activities, as well as regulation of platelet aggregation. Effects of snake L-amino oxidases on platelets are controversial, since they either induce aggregation or inhibit agonist-induced aggregation. These different effects are probably due to different experimental conditions. The chain is L-amino-acid oxidase from Notechis scutatus scutatus (Mainland tiger snake).